The sequence spans 296 residues: Ribosomal protein L11 methyltransferase (296 aa).

The S-adenosyl-L-methionine site is built by Thr-145, Gly-166, Asp-188, and Asn-230.

It belongs to the methyltransferase superfamily. PrmA family.

The protein resides in the cytoplasm. The catalysed reaction is L-lysyl-[protein] + 3 S-adenosyl-L-methionine = N(6),N(6),N(6)-trimethyl-L-lysyl-[protein] + 3 S-adenosyl-L-homocysteine + 3 H(+). Methylates ribosomal protein L11. The protein is Ribosomal protein L11 methyltransferase of Histophilus somni (strain 129Pt) (Haemophilus somnus).